A 140-amino-acid chain; its full sequence is Prepilin peptidase-dependent protein A (140 aa).

A propeptide spanning residues 1-23 (MLLLKASAICGKGNEGKRNKKGG) is cleaved from the precursor. Residue F24 is modified to N-methylphenylalanine. Residues 24–44 (FTLIELTVVLAIMAIILMVIA) traverse the membrane as a helical segment.

It is found in the membrane. Not yet known. In Clostridium perfringens (strain 13 / Type A), this protein is Prepilin peptidase-dependent protein A (ppdA).